Reading from the N-terminus, the 417-residue chain is C4-dicarboxylate transport protein (417 aa).

8 helical membrane passes run 4-26 (IYVQ…PQIG), 41-60 (KLVI…ARMG), 72-94 (ALIY…GRLI), 137-159 (FIGA…TGFA), 180-202 (LFFG…AMGF), 217-239 (ALVA…GIAW), 285-307 (VVGL…YMTL), and 347-369 (FITL…AILV).

Belongs to the dicarboxylate/amino acid:cation symporter (DAACS) (TC 2.A.23) family.

It is found in the cell inner membrane. Responsible for the transport of dicarboxylates such as succinate, fumarate, and malate from the periplasm across the membrane. In Caulobacter vibrioides (strain ATCC 19089 / CIP 103742 / CB 15) (Caulobacter crescentus), this protein is C4-dicarboxylate transport protein.